The sequence spans 570 residues: Formate--tetrahydrofolate ligase (570 aa).

65 to 72 provides a ligand contact to ATP; that stretch reads TPHGEGKT.

It belongs to the formate--tetrahydrofolate ligase family.

It carries out the reaction (6S)-5,6,7,8-tetrahydrofolate + formate + ATP = (6R)-10-formyltetrahydrofolate + ADP + phosphate. Its pathway is one-carbon metabolism; tetrahydrofolate interconversion. The polypeptide is Formate--tetrahydrofolate ligase (Shewanella oneidensis (strain ATCC 700550 / JCM 31522 / CIP 106686 / LMG 19005 / NCIMB 14063 / MR-1)).